Consider the following 245-residue polypeptide: 8-amino-3,8-dideoxy-manno-octulosonate cytidylyltransferase (245 aa).

This sequence belongs to the KdsB family.

The protein resides in the cytoplasm. The enzyme catalyses 8-amino-3,8-dideoxy-alpha-D-manno-octulosonate + CTP = CMP-8-amino-3,8-dideoxy-alpha-D-manno-oct-2-ulosonate + diphosphate. The protein operates within bacterial outer membrane biogenesis; lipopolysaccharide biosynthesis. Activates KDO8N (a required 8-carbon sugar) for incorporation into bacterial lipopolysaccharide in the Shewanella genus. The chain is 8-amino-3,8-dideoxy-manno-octulosonate cytidylyltransferase from Shewanella oneidensis (strain ATCC 700550 / JCM 31522 / CIP 106686 / LMG 19005 / NCIMB 14063 / MR-1).